Reading from the N-terminus, the 87-residue chain is U3-theraphotoxin-Hhn1a 12 (87 aa).

Residues 1 to 24 (MVNMKASMFLTFAGLVLLFVVCYA) form the signal peptide. Positions 25 to 52 (SESEEKEFPKEMLSSIFAVDKDFKQEER) are excised as a propeptide. Disulfide bonds link C54–C67, C61–C72, and C66–C79.

The protein belongs to the neurotoxin 10 (Hwtx-1) family. 51 (Hntx-8) subfamily. Hntx-8 sub-subfamily. In terms of tissue distribution, expressed by the venom gland.

The protein resides in the secreted. In terms of biological role, ion channel inhibitor. The protein is U3-theraphotoxin-Hhn1a 12 of Cyriopagopus hainanus (Chinese bird spider).